The primary structure comprises 318 residues: NAC domain-containing protein 59 (318 aa).

An NAC domain is found at 24–174 (LPPGFRFHPT…ECVISRVFHT (151 aa)). Residues 121–180 (VGMKKTLVFYKGRAPKGVKTNWVMHEYRLEGKFAIDNLSKTAKNECVISRVFHTRTDGTK) mediate DNA binding.

Mostly expressed in root cortex, phloem, atrichoblast and quiescent center (QC), and, to a lower extent, in root endodermis, xylem, pericycle, columella and lateral root cap (LRC). Expressed in roots, cotyledons, very young leaves, senescing leaves, mature flowers and pollen.

It localises to the nucleus. Its function is as follows. Transcription activator that binds to DNA in promoters of target genes on a specific bipartite motif 5'-[AG]CGT[AG](4-5n)[AG][CT]ACGCAA-3'. Triggers the expression of senescence-associated genes during age-, salt- and dark-induced senescence through a regulatory network that may involve cross-talk with salt- and H(2)O(2)-dependent signaling pathways. The sequence is that of NAC domain-containing protein 59 from Arabidopsis thaliana (Mouse-ear cress).